We begin with the raw amino-acid sequence, 137 residues long: MGAFPSPPPWGWSTGFITTPLTTGRLPSQHLDPALPKLFWFTPTLPTCPTVAKQFWDTKRTSPDGNLKVADLPSFAISFATAPAALANCPPLPRVISMLCMAVPKGISVEVDSSFLSKNPFPNCTSFFQSIRLSRCI.

This sequence belongs to the ycf72 family.

It localises to the plastid. It is found in the chloroplast. This is an uncharacterized protein from Oryza nivara (Indian wild rice).